The sequence spans 155 residues: UPF0225 protein ECA2332 (155 aa).

This sequence belongs to the UPF0225 family.

This Pectobacterium atrosepticum (strain SCRI 1043 / ATCC BAA-672) (Erwinia carotovora subsp. atroseptica) protein is UPF0225 protein ECA2332.